A 69-amino-acid polypeptide reads, in one-letter code: Cell division protein CrgA (69 aa).

The next 2 helical transmembrane spans lie at valine 14–phenylalanine 34 and alanine 45–methionine 65.

It belongs to the CrgA family.

It is found in the cell membrane. Involved in cell division. This is Cell division protein CrgA from Tropheryma whipplei (strain TW08/27) (Whipple's bacillus).